The primary structure comprises 89 residues: Small ribosomal subunit protein uS17 (89 aa).

The protein belongs to the universal ribosomal protein uS17 family. Part of the 30S ribosomal subunit.

Its function is as follows. One of the primary rRNA binding proteins, it binds specifically to the 5'-end of 16S ribosomal RNA. The polypeptide is Small ribosomal subunit protein uS17 (Xanthomonas campestris pv. campestris (strain B100)).